Consider the following 873-residue polypeptide: Outer membrane usher protein FimC (873 aa).

Positions 1–15 (MKQIPLILAMSLAFA) are cleaved as a signal peptide. Cysteine 815 and cysteine 838 are oxidised to a cystine.

This sequence belongs to the fimbrial export usher family.

It localises to the cell outer membrane. In terms of biological role, probable porin-like protein necessary for the assembly of a pilin-type protein. This is Outer membrane usher protein FimC (fimC) from Bordetella pertussis (strain Tohama I / ATCC BAA-589 / NCTC 13251).